The following is a 144-amino-acid chain: Maximins 6/H10 (144 aa).

A signal peptide spans 1 to 18 (MNFKYIVAVSFLIASAYA). The propeptide occupies 19 to 43 (RSVKNDEQSLSQRDVLDEESLREIR). At Asn-70 the chain carries Asparagine amide. The propeptide occupies 74–123 (TAEDHEVMKRLEAVMRDLDSLDHPEEASERETRGFNQEEIANRFTKKEKR). Leu-143 carries the post-translational modification Leucine amide.

Belongs to the bombinin family. In terms of tissue distribution, expressed by the skin glands.

It localises to the secreted. Maximin-6 shows antimicrobial activity against bacteria and against the fungus C.albicans. It has little hemolytic activity. Functionally, maximin-H10 shows antimicrobial activity against bacteria and against the fungus C.albicans. Shows strong hemolytic activity. The chain is Maximins 6/H10 from Bombina maxima (Giant fire-bellied toad).